A 169-amino-acid polypeptide reads, in one-letter code: Large ribosomal subunit protein uL10 (169 aa).

It belongs to the universal ribosomal protein uL10 family. As to quaternary structure, part of the ribosomal stalk of the 50S ribosomal subunit. The N-terminus interacts with L11 and the large rRNA to form the base of the stalk. The C-terminus forms an elongated spine to which L12 dimers bind in a sequential fashion forming a multimeric L10(L12)X complex.

Functionally, forms part of the ribosomal stalk, playing a central role in the interaction of the ribosome with GTP-bound translation factors. The sequence is that of Large ribosomal subunit protein uL10 from Orientia tsutsugamushi (strain Boryong) (Rickettsia tsutsugamushi).